A 344-amino-acid polypeptide reads, in one-letter code: Dihydroorotate dehydrogenase (quinone) (344 aa).

FMN contacts are provided by residues 65–69 (AGFDK) and threonine 89. Residue lysine 69 participates in substrate binding. Position 114–118 (114–118 (NRMGF)) interacts with substrate. Residues asparagine 145 and asparagine 178 each contribute to the FMN site. Substrate is bound at residue asparagine 178. Catalysis depends on serine 181, which acts as the Nucleophile. Residue asparagine 183 participates in substrate binding. 2 residues coordinate FMN: lysine 215 and threonine 243. 244–245 (NT) lines the substrate pocket. Residues glycine 269, glycine 298, and 319-320 (YT) each bind FMN.

The protein belongs to the dihydroorotate dehydrogenase family. Type 2 subfamily. In terms of assembly, monomer. The cofactor is FMN.

It is found in the cell membrane. It catalyses the reaction (S)-dihydroorotate + a quinone = orotate + a quinol. It functions in the pathway pyrimidine metabolism; UMP biosynthesis via de novo pathway; orotate from (S)-dihydroorotate (quinone route): step 1/1. Catalyzes the conversion of dihydroorotate to orotate with quinone as electron acceptor. The polypeptide is Dihydroorotate dehydrogenase (quinone) (Clavibacter michiganensis subsp. michiganensis (strain NCPPB 382)).